The sequence spans 275 residues: MFKPKKKLGQCFLIDKNFVNKAVESANLTKDDVVLEIGLGKGILTEELAKNAKKVYVIEIDKSLEPYANKLKELYNNIEIIWGDALKVDLNKLDFNKVVANLPYQISSPITFKLIKRGFDLAVLMYQYEFAKRMVAKEGTKDYGRLSVAVQSRADVEIVAKVPPSAFYPKPKVYSAIVKIKPNKGKYHIENENFFDDFLRAIFQHRNKSVRKALIDSSKELNYNKDEMKKILEDFLNTNSEIKNLINEKVFKLSVKDIVNLSNEFYRFLQNRGRL.

S-adenosyl-L-methionine-binding residues include Leu-13, Gly-38, Glu-59, Asp-84, and Asn-101.

It belongs to the class I-like SAM-binding methyltransferase superfamily. rRNA adenine N(6)-methyltransferase family. RsmA subfamily.

The protein localises to the cytoplasm. Functionally, specifically dimethylates two adjacent adenosines in the loop of a conserved hairpin near the 3'-end of 16S rRNA in the 30S particle. May play a critical role in biogenesis of 30S subunits. In Methanocaldococcus jannaschii (strain ATCC 43067 / DSM 2661 / JAL-1 / JCM 10045 / NBRC 100440) (Methanococcus jannaschii), this protein is Probable ribosomal RNA small subunit methyltransferase A.